We begin with the raw amino-acid sequence, 962 residues long: Glycine dehydrogenase (decarboxylating) (962 aa).

Lys709 is modified (N6-(pyridoxal phosphate)lysine).

Belongs to the GcvP family. In terms of assembly, the glycine cleavage system is composed of four proteins: P, T, L and H. The cofactor is pyridoxal 5'-phosphate.

The enzyme catalyses N(6)-[(R)-lipoyl]-L-lysyl-[glycine-cleavage complex H protein] + glycine + H(+) = N(6)-[(R)-S(8)-aminomethyldihydrolipoyl]-L-lysyl-[glycine-cleavage complex H protein] + CO2. Functionally, the glycine cleavage system catalyzes the degradation of glycine. The P protein binds the alpha-amino group of glycine through its pyridoxal phosphate cofactor; CO(2) is released and the remaining methylamine moiety is then transferred to the lipoamide cofactor of the H protein. In Shewanella loihica (strain ATCC BAA-1088 / PV-4), this protein is Glycine dehydrogenase (decarboxylating).